Here is a 73-residue protein sequence, read N- to C-terminus: NAD(P)H-quinone oxidoreductase subunit L (73 aa).

The next 2 helical transmembrane spans lie at 6–26 and 44–64; these read SLIG…LPLL and VLMF…APFM.

This sequence belongs to the complex I NdhL subunit family. NDH-1 can be composed of about 15 different subunits; different subcomplexes with different compositions have been identified which probably have different functions.

It localises to the cellular thylakoid membrane. The catalysed reaction is a plastoquinone + NADH + (n+1) H(+)(in) = a plastoquinol + NAD(+) + n H(+)(out). The enzyme catalyses a plastoquinone + NADPH + (n+1) H(+)(in) = a plastoquinol + NADP(+) + n H(+)(out). In terms of biological role, NDH-1 shuttles electrons from an unknown electron donor, via FMN and iron-sulfur (Fe-S) centers, to quinones in the respiratory and/or the photosynthetic chain. The immediate electron acceptor for the enzyme in this species is believed to be plastoquinone. Couples the redox reaction to proton translocation, and thus conserves the redox energy in a proton gradient. Cyanobacterial NDH-1 also plays a role in inorganic carbon-concentration. The sequence is that of NAD(P)H-quinone oxidoreductase subunit L from Synechococcus sp. (strain JA-2-3B'a(2-13)) (Cyanobacteria bacterium Yellowstone B-Prime).